A 445-amino-acid chain; its full sequence is Cyclic GMP-AMP synthase-like receptor 1 (445 aa).

Mg(2+) contacts are provided by glutamate 70, aspartate 72, and aspartate 186. 70–72 (EYD) serves as a coordination point for ATP. GTP-binding positions include aspartate 186 and 232–239 (RTSFYEAE). ATP-binding positions include 236–239 (YEAE), lysine 257, and 270–274 (SYHIK). Residues 357 to 445 (LNDDNENSVH…KSKTTTPKPS (89 aa)) are disordered. Basic and acidic residues predominate over residues 377-398 (QKMEKTSTESEQKKPTETKPNA). Over residues 435 to 445 (TKSKTTTPKPS) the composition is skewed to low complexity.

Belongs to the mab-21 family. Mg(2+) is required as a cofactor. Requires Mn(2+) as cofactor.

The catalysed reaction is GTP + ATP = 3',2'-cGAMP + 2 diphosphate. It carries out the reaction GTP + ATP = pppA(2'-5')pG + diphosphate. The enzyme catalyses pppA(2'-5')pG = 3',2'-cGAMP + diphosphate. The enzyme activity is specifically activated by double-stranded RNA (dsRNA). Functionally, nucleotidyltransferase that catalyzes the formation of cyclic GMP-AMP (3',2'-cGAMP) from ATP and GTP and plays a key role in innate immunity. Synthesizes 3',2'-cGAMP in a two-step reaction through production of the linear intermediate pppA(2'-5')pG. Acts as a key sensor of double-stranded RNA (dsRNA), the presence of dsRNA in the cytoplasm being a danger signal that triggers the immune responses. Directly binds dsRNA, activating the nucleotidyltransferase activity, leading to synthesis of 3',2'-cGAMP, a second messenger that binds to and activates Sting, thereby triggering the antiviral immune response via activation of the NF-kappa-B transcription factor Rel (Relish). This chain is Cyclic GMP-AMP synthase-like receptor 1, found in Drosophila erecta (Fruit fly).